Consider the following 103-residue polypeptide: Mitochondrial import inner membrane translocase subunit Tim10 B (103 aa).

Residues 28 to 52 (CFQRCVPSLHHRALDAEEEACLHSC) carry the Twin CX3C motif motif. 2 cysteine pairs are disulfide-bonded: C28/C52 and C32/C48.

Belongs to the small Tim family. As to quaternary structure, component of the TIM22 complex, which core is composed of TIMM22, associated with TIMM10 (TIMM10A and/or TIMM10B), TIMM9, AGK and TIMM29. Ubiquitous, with highest expression in heart, kidney, liver and skeletal muscle.

The protein resides in the mitochondrion inner membrane. In terms of biological role, component of the TIM22 complex, a complex that mediates the import and insertion of multi-pass transmembrane proteins into the mitochondrial inner membrane. The TIM22 complex forms a twin-pore translocase that uses the membrane potential as the external driving force. In the TIM22 complex, it may act as a docking point for the soluble 70 kDa complex that guides the target proteins in transit through the aqueous mitochondrial intermembrane space. The sequence is that of Mitochondrial import inner membrane translocase subunit Tim10 B (TIMM10B) from Homo sapiens (Human).